A 1036-amino-acid chain; its full sequence is Pre-mRNA-processing factor 39-2 (1036 aa).

Residues 1-24 (MVTTEVRTAVSDKEPLQRSPELDS) are disordered. 6 HAT repeats span residues 62–94 (DDIEKLCLVYDAFLLEFPLCHGYWRKYAYHKIK), 96–128 (CTLEDAVEVFERAVQAATYSVAVWLDYCAFAVA), 131–166 (EDPHDVSRLFERGLSFIGKDYSCCTLWDKYIEYLLG), 168–201 (QQWSSLANVYLRTLKYPSKKLDLYYKNFRKIAAS), 278–310 (CFETQIRRPYFHVKPLDTNQLDNWHAYLSFGET), and 312–344 (GDFDWAINLYERCLIPCANYTEFWFRYVDFVES). Disordered stretches follow at residues 595–618 (GISSIVDSPPKEKKESSLDSYGTQ), 714–767 (PSGS…PVGT), and 995–1036 (KGDE…ISSI). Residues 714–726 (PSGSQSPQSYQSQ) are compositionally biased toward low complexity. Basic and acidic residues predominate over residues 740–755 (RDLNQMHRDSKPRSQE). A compositionally biased stretch (polar residues) spans 1002–1036 (SMPQGSTTNSDIQKSQESGAVNEANLSSDTSISSI).

This sequence belongs to the PRP39 family.

It is found in the nucleus. Functionally, involved in pre-mRNA splicing. The polypeptide is Pre-mRNA-processing factor 39-2 (Arabidopsis thaliana (Mouse-ear cress)).